The sequence spans 302 residues: Sulfate adenylyltransferase subunit 2 (302 aa).

Belongs to the PAPS reductase family. CysD subfamily. Heterodimer composed of CysD, the smaller subunit, and CysN.

It catalyses the reaction sulfate + ATP + H(+) = adenosine 5'-phosphosulfate + diphosphate. Its pathway is sulfur metabolism; hydrogen sulfide biosynthesis; sulfite from sulfate: step 1/3. Its function is as follows. With CysN forms the ATP sulfurylase (ATPS) that catalyzes the adenylation of sulfate producing adenosine 5'-phosphosulfate (APS) and diphosphate, the first enzymatic step in sulfur assimilation pathway. APS synthesis involves the formation of a high-energy phosphoric-sulfuric acid anhydride bond driven by GTP hydrolysis by CysN coupled to ATP hydrolysis by CysD. The sequence is that of Sulfate adenylyltransferase subunit 2 from Xanthomonas campestris pv. campestris (strain 8004).